The sequence spans 450 residues: Probable malate:quinone oxidoreductase (450 aa).

It belongs to the MQO family. Requires FAD as cofactor.

It carries out the reaction (S)-malate + a quinone = a quinol + oxaloacetate. It functions in the pathway carbohydrate metabolism; tricarboxylic acid cycle; oxaloacetate from (S)-malate (quinone route): step 1/1. The sequence is that of Probable malate:quinone oxidoreductase from Helicobacter pylori (strain P12).